Here is a 235-residue protein sequence, read N- to C-terminus: Phosphoribosylaminoimidazole-succinocarboxamide synthase (235 aa).

It belongs to the SAICAR synthetase family.

It carries out the reaction 5-amino-1-(5-phospho-D-ribosyl)imidazole-4-carboxylate + L-aspartate + ATP = (2S)-2-[5-amino-1-(5-phospho-beta-D-ribosyl)imidazole-4-carboxamido]succinate + ADP + phosphate + 2 H(+). The protein operates within purine metabolism; IMP biosynthesis via de novo pathway; 5-amino-1-(5-phospho-D-ribosyl)imidazole-4-carboxamide from 5-amino-1-(5-phospho-D-ribosyl)imidazole-4-carboxylate: step 1/2. In Streptococcus gordonii (strain Challis / ATCC 35105 / BCRC 15272 / CH1 / DL1 / V288), this protein is Phosphoribosylaminoimidazole-succinocarboxamide synthase.